A 366-amino-acid polypeptide reads, in one-letter code: Putative [LysW]-aminoadipate semialdehyde/glutamate semialdehyde transaminase (366 aa).

Pyridoxal 5'-phosphate contacts are provided by residues glycine 90–threonine 91 and phenylalanine 117. A substrate-binding site is contributed by arginine 120. Aspartate 202–glutamine 205 contacts pyridoxal 5'-phosphate. At lysine 230 the chain carries N6-(pyridoxal phosphate)lysine. Substrate is bound at residue serine 254. Threonine 255 is a binding site for pyridoxal 5'-phosphate.

The protein belongs to the class-III pyridoxal-phosphate-dependent aminotransferase family. LysJ subfamily. As to quaternary structure, homodimer. Pyridoxal 5'-phosphate is required as a cofactor.

It localises to the cytoplasm. It catalyses the reaction [amino-group carrier protein]-C-terminal-gamma-(L-lysyl)-L-glutamate + 2-oxoglutarate = [amino-group carrier protein]-C-terminal-N-(1-carboxy-5-oxopentan-1-yl)-L-glutamine + L-glutamate. It carries out the reaction [amino-group carrier protein]-C-terminal-gamma-(L-ornithyl)-L-glutamate + 2-oxoglutarate = [amino-group carrier protein]-C-terminal-gamma-(L-glutamyl-5-semialdehyde)-L-glutamate + L-glutamate. The protein operates within amino-acid biosynthesis; L-lysine biosynthesis via AAA pathway; L-lysine from L-alpha-aminoadipate (Thermus route): step 4/5. Its pathway is amino-acid biosynthesis; L-arginine biosynthesis. Involved in both the arginine and lysine biosynthetic pathways. This Pyrococcus furiosus (strain ATCC 43587 / DSM 3638 / JCM 8422 / Vc1) protein is Putative [LysW]-aminoadipate semialdehyde/glutamate semialdehyde transaminase.